The chain runs to 129 residues: UPF0102 protein Mrad2831_2938 (129 aa).

It belongs to the UPF0102 family.

The chain is UPF0102 protein Mrad2831_2938 from Methylobacterium radiotolerans (strain ATCC 27329 / DSM 1819 / JCM 2831 / NBRC 15690 / NCIMB 10815 / 0-1).